Consider the following 95-residue polypeptide: MRHYEIMIILDPAQDERTVAPSLDKYLDVVRKEKGNVDKVDIWGKRRLAYPIQKKEEGIYVVVDFTCESATVLEVDRLLNLNDSVLRTKVLRTDA.

It belongs to the bacterial ribosomal protein bS6 family.

Its function is as follows. Binds together with bS18 to 16S ribosomal RNA. This Corynebacterium kroppenstedtii (strain DSM 44385 / JCM 11950 / CIP 105744 / CCUG 35717) protein is Small ribosomal subunit protein bS6.